Here is a 212-residue protein sequence, read N- to C-terminus: ATP-dependent dethiobiotin synthetase BioD (212 aa).

13–18 (GIGKTV) contributes to the ATP binding site. A Mg(2+)-binding site is contributed by T17. K33 is an active-site residue. E100 contributes to the Mg(2+) binding site. ATP-binding positions include 100–103 (EGAG) and 184–186 (PHV).

It belongs to the dethiobiotin synthetase family. Homodimer. Mg(2+) serves as cofactor.

Its subcellular location is the cytoplasm. It carries out the reaction (7R,8S)-7,8-diammoniononanoate + CO2 + ATP = (4R,5S)-dethiobiotin + ADP + phosphate + 3 H(+). It functions in the pathway cofactor biosynthesis; biotin biosynthesis; biotin from 7,8-diaminononanoate: step 1/2. Functionally, catalyzes a mechanistically unusual reaction, the ATP-dependent insertion of CO2 between the N7 and N8 nitrogen atoms of 7,8-diaminopelargonic acid (DAPA, also called 7,8-diammoniononanoate) to form a ureido ring. In Nitrobacter hamburgensis (strain DSM 10229 / NCIMB 13809 / X14), this protein is ATP-dependent dethiobiotin synthetase BioD.